The chain runs to 42 residues: Cytochrome b6-f complex subunit 7 (42 aa).

The helical transmembrane segment at 15–35 (IVTAAVTCIFMVLFGLSLGFA) threads the bilayer.

This sequence belongs to the PetM family. In terms of assembly, the 4 large subunits of the cytochrome b6-f complex are cytochrome b6, subunit IV (17 kDa polypeptide, PetD), cytochrome f and the Rieske protein, while the 4 small subunits are PetG, PetL, PetM and PetN. The complex functions as a dimer.

The protein resides in the plastid. The protein localises to the chloroplast thylakoid membrane. Functionally, component of the cytochrome b6-f complex, which mediates electron transfer between photosystem II (PSII) and photosystem I (PSI), cyclic electron flow around PSI, and state transitions. In Trieres chinensis (Marine centric diatom), this protein is Cytochrome b6-f complex subunit 7.